The sequence spans 156 residues: Arginine repressor (156 aa).

Belongs to the ArgR family.

It is found in the cytoplasm. It participates in amino-acid biosynthesis; L-arginine biosynthesis [regulation]. Its function is as follows. Regulates arginine biosynthesis genes. This chain is Arginine repressor, found in Vibrio cholerae serotype O1 (strain ATCC 39315 / El Tor Inaba N16961).